The sequence spans 86 residues: Small ribosomal subunit protein bS16 (86 aa).

It belongs to the bacterial ribosomal protein bS16 family.

This is Small ribosomal subunit protein bS16 from Borreliella afzelii (strain PKo) (Borrelia afzelii).